A 247-amino-acid chain; its full sequence is Ubiquinone biosynthesis O-methyltransferase (247 aa).

S-adenosyl-L-methionine-binding residues include Arg41, Gly72, Asp93, and Met136.

Belongs to the methyltransferase superfamily. UbiG/COQ3 family.

It catalyses the reaction a 3-demethylubiquinol + S-adenosyl-L-methionine = a ubiquinol + S-adenosyl-L-homocysteine + H(+). It carries out the reaction a 3-(all-trans-polyprenyl)benzene-1,2-diol + S-adenosyl-L-methionine = a 2-methoxy-6-(all-trans-polyprenyl)phenol + S-adenosyl-L-homocysteine + H(+). It participates in cofactor biosynthesis; ubiquinone biosynthesis. In terms of biological role, O-methyltransferase that catalyzes the 2 O-methylation steps in the ubiquinone biosynthetic pathway. This chain is Ubiquinone biosynthesis O-methyltransferase, found in Bartonella tribocorum (strain CIP 105476 / IBS 506).